The following is an 837-amino-acid chain: Phosphatidylinositol-glycan-specific phospholipase D (837 aa).

Residues 1–23 (MSAGRLWSSLLLLLPLFCSKSSS) form the signal peptide. Asn94, Asn267, Asn287, Asn303, and Asn317 each carry an N-linked (GlcNAc...) asparagine glycan. FG-GAP repeat units follow at residues 364 to 425 (SPSA…GLPP), 431 to 492 (NKEG…GRLS), 494 to 554 (SPNV…RNDK), 561 to 619 (EADW…SLGK), 629 to 689 (QSTI…GATR), 701 to 767 (ALLS…TLGD), and 785 to 837 (QYVL…FSSD). 5 N-linked (GlcNAc...) asparagine glycosylation sites follow: Asn477, Asn496, Asn586, Asn599, and Asn655.

This sequence belongs to the GPLD1 family. As to quaternary structure, monomer. As to expression, widely expressed.

It localises to the secreted. The catalysed reaction is a 6-(alpha-D-glucosaminyl)-1-(1,2-diacyl-sn-glycero-3-phospho)-1D-myo-inositol + H2O = 6-(alpha-D-glucosaminyl)-1D-myo-inositol + a 1,2-diacyl-sn-glycero-3-phosphate + H(+). Functionally, this protein hydrolyzes the inositol phosphate linkage in proteins anchored by phosphatidylinositol glycans (GPI-anchor) thus releasing these proteins from the membrane. The protein is Phosphatidylinositol-glycan-specific phospholipase D (Gpld1) of Mus musculus (Mouse).